The primary structure comprises 180 residues: Signal peptidase complex subunit 3 (180 aa).

The Cytoplasmic portion of the chain corresponds to 1-12; that stretch reads MHNLLSRANSLL. The chain crosses the membrane as a helical; Signal-anchor for type II membrane protein span at residues 13-33; sequence AFTLWVMAAVTAACFLSTVFL. Topologically, residues 34–180 are lumenal; the sequence is DYTVSNHLEV…PTTYTTTRRS (147 aa). A glycan (N-linked (GlcNAc...) asparagine) is linked at N141.

It belongs to the SPCS3 family. As to quaternary structure, component of the signal peptidase complex (SPC) composed of a catalytic subunit sec-11 and three accessory subunits spcs-1, spcs-2 and spcs-3. The complex induces a local thinning of the ER membrane which is used to measure the length of the signal peptide (SP) h-region of protein substrates. This ensures the selectivity of the complex towards h-regions shorter than 18-20 amino acids.

The protein localises to the endoplasmic reticulum membrane. Functionally, essential component of the signal peptidase complex (SPC) which catalyzes the cleavage of N-terminal signal sequences from nascent proteins as they are translocated into the lumen of the endoplasmic reticulum. Essential for the SPC catalytic activity, possibly by stabilizing and positioning the active center of the complex close to the lumenal surface. The chain is Signal peptidase complex subunit 3 from Caenorhabditis briggsae.